A 79-amino-acid chain; its full sequence is uncharacterized protein (79 aa).

This is an uncharacterized protein from Ovis aries (Sheep).